Consider the following 170-residue polypeptide: Capsid protein (170 aa).

A compositionally biased stretch (basic residues) spans 1 to 19; sequence MAQLRWGRKGVRSQRRKYS. Residues 1–25 form a disordered region; sequence MAQLRWGRKGVRSQRRKYSRPVAYK.

This sequence belongs to the nanoviridae capsid protein family.

It is found in the virion. This Subterranean clover stunt virus (strain J) (SCSV) protein is Capsid protein (DNA-S).